The sequence spans 279 residues: 3-methyl-2-oxobutanoate hydroxymethyltransferase 2 (279 aa).

Residues aspartate 58 and aspartate 97 each coordinate Mg(2+). Residues 58 to 59 (DS), aspartate 97, and lysine 126 contribute to the 3-methyl-2-oxobutanoate site. Residue glutamate 128 participates in Mg(2+) binding. The active-site Proton acceptor is the glutamate 195.

This sequence belongs to the PanB family. In terms of assembly, homodecamer; pentamer of dimers. Mg(2+) serves as cofactor.

It localises to the cytoplasm. The enzyme catalyses 3-methyl-2-oxobutanoate + (6R)-5,10-methylene-5,6,7,8-tetrahydrofolate + H2O = 2-dehydropantoate + (6S)-5,6,7,8-tetrahydrofolate. It functions in the pathway cofactor biosynthesis; (R)-pantothenate biosynthesis; (R)-pantoate from 3-methyl-2-oxobutanoate: step 1/2. Catalyzes the reversible reaction in which hydroxymethyl group from 5,10-methylenetetrahydrofolate is transferred onto alpha-ketoisovalerate to form ketopantoate. The protein is 3-methyl-2-oxobutanoate hydroxymethyltransferase 2 of Methylibium petroleiphilum (strain ATCC BAA-1232 / LMG 22953 / PM1).